The primary structure comprises 120 residues: Large ribosomal subunit protein eL18 (120 aa).

The protein belongs to the eukaryotic ribosomal protein eL18 family.

This is Large ribosomal subunit protein eL18 from Thermoplasma acidophilum (strain ATCC 25905 / DSM 1728 / JCM 9062 / NBRC 15155 / AMRC-C165).